A 186-amino-acid chain; its full sequence is Glutathione peroxidase 7 (186 aa).

A signal peptide spans 1-18 (MVAAVATAWLLLWAAACA). Cys-56 is an active-site residue.

Belongs to the glutathione peroxidase family.

Its subcellular location is the secreted. It carries out the reaction 2 glutathione + H2O2 = glutathione disulfide + 2 H2O. Its function is as follows. It protects esophageal epithelia from hydrogen peroxide-induced oxidative stress. It suppresses acidic bile acid-induced reactive oxygen species (ROS) and protects against oxidative DNA damage and double-strand breaks. This Mus musculus (Mouse) protein is Glutathione peroxidase 7 (Gpx7).